The primary structure comprises 383 residues: ATP phosphoribosyltransferase regulatory subunit (383 aa).

It belongs to the class-II aminoacyl-tRNA synthetase family. HisZ subfamily. In terms of assembly, heteromultimer composed of HisG and HisZ subunits.

Its subcellular location is the cytoplasm. The protein operates within amino-acid biosynthesis; L-histidine biosynthesis; L-histidine from 5-phospho-alpha-D-ribose 1-diphosphate: step 1/9. Required for the first step of histidine biosynthesis. May allow the feedback regulation of ATP phosphoribosyltransferase activity by histidine. This Janthinobacterium sp. (strain Marseille) (Minibacterium massiliensis) protein is ATP phosphoribosyltransferase regulatory subunit.